A 432-amino-acid polypeptide reads, in one-letter code: Pentatricopeptide repeat-containing protein 2, mitochondrial (432 aa).

The N-terminal 33 residues, 1–33 (MQFIKRTFPRRAFVDLLLNRFCLREFATTYSVS), are a transit peptide targeting the mitochondrion. 4 PPR repeats span residues 108 to 142 (KTVAYNLVLQYHLAKGHYNAAWSLYNDMKKRQQKP), 143 to 179 (SDHTYSILLKGFCDAIEKNKQGNFSKLREYSEKVTAS), 360 to 394 (NLQVYHEKLRNLVQQGQAAECLNTIKRMSHNGPFP), and 395 to 429 (TQQTFLIVLSLCKRPKFYSYTKSFLDLAKKLNVPV).

Its subcellular location is the mitochondrion. Functionally, mitochondrial RNA-binding protein that acts as a general translation factor. Plays a critical role in the synthesis of all mitochondrial DNA-encoded oxidative phosphorylation subunits, which are essential for mitochondrial respiration. Essential for the expression of iron-sulfur cluster (ISC) proteins as well as other heme proteins related to iron-sensing, and thus plays a key role in iron homeostasis. The sequence is that of Pentatricopeptide repeat-containing protein 2, mitochondrial from Schizosaccharomyces pombe (strain 972 / ATCC 24843) (Fission yeast).